Here is a 122-residue protein sequence, read N- to C-terminus: Protein FAM223B (122 aa).

This sequence belongs to the FAM223 family.

The polypeptide is Protein FAM223B (FAM223B) (Homo sapiens (Human)).